The chain runs to 371 residues: Glycosyltransferase 8 domain-containing protein 1 (371 aa).

The Cytoplasmic segment spans residues 1-7 (MSFRKVN). A helical; Signal-anchor for type II membrane protein transmembrane segment spans residues 8-28 (IIIWVLAVVLFLLVLHHNFLS). Over 29-371 (LSSLLKNDIS…RRHMDTSNIK (343 aa)) the chain is Lumenal. N-linked (GlcNAc...) asparagine glycosylation occurs at Asn257.

The protein belongs to the glycosyltransferase 8 family.

It localises to the membrane. The protein is Glycosyltransferase 8 domain-containing protein 1 (Glt8d1) of Mus musculus (Mouse).